The following is a 49-amino-acid chain: U1-theraphotoxin-Lp1b (49 aa).

Intrachain disulfides connect C4/C17, C8/C41, C22/C24, and C35/C46.

As to expression, expressed by the venom gland.

Its subcellular location is the secreted. Toxin that causes irreversible contractile paralysis into adult Aedes aegypti resulting in 100% mortality after 24 hours. This is U1-theraphotoxin-Lp1b from Lasiodora parahybana (Brazilian salmon pink birdeater).